Here is a 452-residue protein sequence, read N- to C-terminus: tRNA modification GTPase MnmE (452 aa).

3 residues coordinate (6S)-5-formyl-5,6,7,8-tetrahydrofolate: Arg25, Glu82, and Arg125. Residues 221–374 (GLHVVLAGKP…LRARLLALAG (154 aa)) form the TrmE-type G domain. Asn231 is a binding site for K(+). GTP-binding positions include 231-236 (NVGKSS), 250-256 (TPIAGTT), 275-278 (DTAG), and 355-357 (SAR). Ser235 is a Mg(2+) binding site. Residues Thr250, Ile252, and Thr255 each contribute to the K(+) site. Thr256 contributes to the Mg(2+) binding site. (6S)-5-formyl-5,6,7,8-tetrahydrofolate is bound at residue Lys452.

The protein belongs to the TRAFAC class TrmE-Era-EngA-EngB-Septin-like GTPase superfamily. TrmE GTPase family. Homodimer. Heterotetramer of two MnmE and two MnmG subunits. K(+) serves as cofactor.

It is found in the cytoplasm. Its function is as follows. Exhibits a very high intrinsic GTPase hydrolysis rate. Involved in the addition of a carboxymethylaminomethyl (cmnm) group at the wobble position (U34) of certain tRNAs, forming tRNA-cmnm(5)s(2)U34. The polypeptide is tRNA modification GTPase MnmE (Bordetella petrii (strain ATCC BAA-461 / DSM 12804 / CCUG 43448)).